A 141-amino-acid chain; its full sequence is Hemoglobin subunit alpha-1 (141 aa).

Positions 1–141 (VLSPEDKNNV…VSTVLTSKYR (141 aa)) constitute a Globin domain. H58 is a binding site for O2. Position 87 (H87) interacts with heme b.

This sequence belongs to the globin family. In terms of assembly, heterotetramer of two alpha chains and two beta chains. Red blood cells.

Its function is as follows. Involved in oxygen transport from the lung to the various peripheral tissues. The protein is Hemoglobin subunit alpha-1 of Tadarida brasiliensis (Brazilian free-tailed bat).